The chain runs to 94 residues: Lipolysis-activating peptide 1-beta chain (94 aa).

The first 19 residues, 1–19 (MKILAVVLISVIVLNTANG), serve as a signal peptide directing secretion. The LCN-type CS-alpha/beta domain occupies 20 to 87 (ENYYPQKYTN…YFNALESQCP (68 aa)). 3 disulfides stabilise this stretch: Cys-34/Cys-56, Cys-42/Cys-66, and Cys-46/Cys-68.

The protein belongs to the long (3 C-C) scorpion toxin superfamily. In terms of assembly, homodimer; disulfide-linked or monomer (edited version) or heterodimer of an alpha chain (AC P0CI44 or AC P0CI45) and this beta chain (non-edited version). In terms of tissue distribution, expressed by the venom gland.

Its subcellular location is the secreted. The homodimer inhibits HMG-CoA reductase (HMGCR) (32% of inhibition produced by 0.6 uM), a glycoprotein involved in the control of cholesterol biosynthesis. The inhibitory effects of bumarsin are seen at much lower concentrations (0.6 uM) than that for statins such as atorvastatin (5 mM) and simvastatin (10 uM). In addition to inhibition of HMG-CoA reductase, this protein lowers cholesterol levels by inducing steroid hormone synthesis via StAR, and by increasing reverse cholesterol transport mediated by the induction of ABCA1 and APOA1. In terms of biological role, the heterodimer non-edited LVP1 induces lipolysis in rat adipocytes. Induction of lipolysis by LVP1 appears to be mediated through the beta-2 adrenergic receptor pathway (ADRB2). Functionally, the monomer edited version, similar to alpha-toxins, may modulate voltage-gated sodium channels (Nav) and may block voltage-gated potassium channels (Kv). The sequence is that of Lipolysis-activating peptide 1-beta chain from Lychas mucronatus (Chinese swimming scorpion).